A 137-amino-acid polypeptide reads, in one-letter code: MASERVEKILEDLKALSLLEAAELVKGIEEVFGVKAEAPAGGGMMVMPGVMPGAPAAAAPAEPVEEQTEFTVMLEEVPADKKIAILKVAREITGLGLKEAKDLVEAAPKAVKEGVNKDDAATIKKKLEEAGAKASIK.

This sequence belongs to the bacterial ribosomal protein bL12 family. In terms of assembly, homodimer. Part of the ribosomal stalk of the 50S ribosomal subunit. Forms a multimeric L10(L12)X complex, where L10 forms an elongated spine to which 2 to 4 L12 dimers bind in a sequential fashion. Binds GTP-bound translation factors.

In terms of biological role, forms part of the ribosomal stalk which helps the ribosome interact with GTP-bound translation factors. Is thus essential for accurate translation. In Gloeobacter violaceus (strain ATCC 29082 / PCC 7421), this protein is Large ribosomal subunit protein bL12.